A 1103-amino-acid chain; its full sequence is PALM2-AKAP2 fusion protein (1103 aa).

Disordered stretches follow at residues 178–197 (ESAS…KKPP) and 304–396 (YNGT…SSRD). Residues 179–189 (SASNATETSGP) show a composition bias toward polar residues. Ser322, Ser352, and Ser383 each carry phosphoserine. Residues 380-392 (VPVSPSSTTSSRC) show a composition bias toward low complexity. Lys405 participates in a covalent cross-link: Glycyl lysine isopeptide (Lys-Gly) (interchain with G-Cter in SUMO1); alternate. A Glycyl lysine isopeptide (Lys-Gly) (interchain with G-Cter in SUMO2); alternate cross-link involves residue Lys405. Positions 444–521 (EEMLELEKER…QKQLQQQQQQ (78 aa)) form a coiled coil. Disordered regions lie at residues 483–544 (EQLD…DKAK) and 566–662 (NSRQ…SKLW). Positions 490–505 (LESHKKYKERKERRAQ) are enriched in basic and acidic residues. Residues 506–521 (QEQLLLQKQLQQQQQQ) show a composition bias toward low complexity. Residues 522-531 (PPSQLCTAPA) show a composition bias toward polar residues. A compositionally biased stretch (basic and acidic residues) spans 533-544 (SHERASMIDKAK). Over residues 566 to 579 (NSRQAVAKGQSTPR) the composition is skewed to polar residues. A phosphoserine mark is found at Ser567 and Ser624. Over residues 633–643 (AAGSQGNTASQ) the composition is skewed to polar residues. Phosphoserine occurs at positions 692, 696, and 748. Polar residues predominate over residues 745 to 763 (QENSLADFSLPQTPQTDNP). The segment at 745–794 (QENSLADFSLPQTPQTDNPSEGRGEGVSKSFSDHGFYSPSSTLGDSPLVD) is disordered. Thr757 carries the phosphothreonine modification. A PKA-RII subunit binding domain region spans residues 797–810 (LEYQAGLLVQNAIQ). A compositionally biased stretch (basic and acidic residues) spans 817 to 829 (VDKAVSKTSRDGA). A disordered region spans residues 817 to 907 (VDKAVSKTSR…GPINMEETRP (91 aa)). Ser862 carries the phosphoserine modification. The segment covering 865–886 (QEKRDVLPKILPAEDRALRERG) has biased composition (basic and acidic residues). Positions 941–979 (KLRSRKQRTLSMIEEEIRAAQEREEELKRQRQVLQSTQS) form a coiled coil. A phosphoserine mark is found at Ser951, Ser979, Ser1009, and Ser1016. The disordered stretch occupies residues 962-1035 (EREEELKRQR…AAGTQRPKNL (74 aa)). Residues 976–990 (STQSPRTKNAPSLPS) show a composition bias toward polar residues.

Expressed in infantile heart and muscle, and fibroblasts.

It is found in the apical cell membrane. Binds to regulatory subunit (RII) of protein kinase A. May be involved in establishing polarity in signaling systems or in integrating PKA-RII isoforms with downstream effectors to capture, amplify and focus diffuse, trans-cellular signals carried by cAMP. Binds to and modulates the structure of the actin cytoskeleton. This Homo sapiens (Human) protein is PALM2-AKAP2 fusion protein.